The following is a 142-amino-acid chain: Large ribosomal subunit protein uL11 (142 aa).

The protein belongs to the universal ribosomal protein uL11 family. Part of the ribosomal stalk of the 50S ribosomal subunit. Interacts with L10 and the large rRNA to form the base of the stalk. L10 forms an elongated spine to which L12 dimers bind in a sequential fashion forming a multimeric L10(L12)X complex. One or more lysine residues are methylated.

Its function is as follows. Forms part of the ribosomal stalk which helps the ribosome interact with GTP-bound translation factors. This is Large ribosomal subunit protein uL11 from Shewanella baltica (strain OS223).